Here is a 133-residue protein sequence, read N- to C-terminus: DNA-directed RNA polymerase subunit omega (133 aa).

Belongs to the RNA polymerase subunit omega family. As to quaternary structure, the RNAP catalytic core consists of 2 alpha, 1 beta, 1 beta' and 1 omega subunit. When a sigma factor is associated with the core the holoenzyme is formed, which can initiate transcription.

The enzyme catalyses RNA(n) + a ribonucleoside 5'-triphosphate = RNA(n+1) + diphosphate. Promotes RNA polymerase assembly. Latches the N- and C-terminal regions of the beta' subunit thereby facilitating its interaction with the beta and alpha subunits. The polypeptide is DNA-directed RNA polymerase subunit omega (Brucella canis (strain ATCC 23365 / NCTC 10854 / RM-666)).